Consider the following 509-residue polypeptide: Proton-gated ion channel subunit pbo-5 (509 aa).

The first 21 residues, 1–21, serve as a signal peptide directing secretion; that stretch reads MTRLSILQHLLTFLILSKINA. Topologically, residues 22-275 are extracellular; the sequence is TSTTESYFDS…ISLKRRPLFY (254 aa). Cys193 and Cys207 form a disulfide bridge. A run of 3 helical transmembrane segments spans residues 276–296, 310–330, and 336–356; these read MVTL…GLFA, LGVT…EKVP, and VPLL…AAMT. Residues 357–487 are Cytoplasmic-facing; that stretch reads TGIVMKVHRL…GYVRISERLD (131 aa). The chain crosses the membrane as a helical span at residues 488-508; it reads ILFMFLFLSTVTIPVAVLFYL.

The protein belongs to the ligand-gated ion channel (TC 1.A.9) family. Acetylcholine receptor (TC 1.A.9.1) subfamily. In terms of assembly, the functional channel is a heterooligomer of pbo-5 and pbo-6. May self-associate to form homooligomers with negligible ion channel activity. As to expression, expressed in the posterior body muscles. Also detected in the RIFL, RIFR and RIS head neurons.

It localises to the membrane. In terms of biological role, forms a proton-gated ion channel with pbo-6 that is activated by acidification of the posterior coelomic space, leading to posterior body wall muscle contraction (pBoc) during the defecation cycle. Probably by regulating the defecation motor program, required for fatty acid uptake by intestinal cells. Does not bind neurotransmitters such as acetylcholine, gamma-aminobutyric acid, glycine, serotonin, glutamate or choline. This is Proton-gated ion channel subunit pbo-5 from Caenorhabditis elegans.